A 926-amino-acid chain; its full sequence is Storkhead-box protein 2 (926 aa).

6 disordered regions span residues 1–32 (MKKT…RSEK), 338–394 (EEEK…IPGG), 452–529 (EMPF…SYVD), 632–693 (GVKK…SLDK), 724–803 (LKSH…GTMQ), and 825–926 (LAPK…VTSV). Positions 18–32 (FSDRASDRMRSRSEK) are enriched in basic and acidic residues. Basic residues predominate over residues 353–378 (HSGRSKKSRTHRKSHGKSRSHSKTRV). The span at 379–394 (SKGDPSDGSHLDIPGG) shows a compositional bias: basic and acidic residues. Basic residues predominate over residues 463–472 (SHSKVHRSHS). Positions 473–495 (HTQDRRSRNERSNKAKERSRSMD) are enriched in basic and acidic residues. Residues 518–529 (QDDQTPSQSYVD) are compositionally biased toward polar residues. Basic and acidic residues-rich tracts occupy residues 632–658 (GVKK…EESP) and 684–693 (HGAEPSSLDK). Over residues 746-772 (LGTSAAQATPASQRQQESGGNQETSFD) the composition is skewed to polar residues. Basic and acidic residues predominate over residues 785-799 (GANKNTEEEKNREDV). Composition is skewed to polar residues over residues 847 to 884 (MDSS…QNPA) and 914 to 926 (KPSN…VTSV).

The protein is Storkhead-box protein 2 (STOX2) of Macaca fascicularis (Crab-eating macaque).